Here is a 421-residue protein sequence, read N- to C-terminus: Signal recognition particle receptor FtsY (421 aa).

Residues 228–235 (GINGAGKT), 309–313 (DTAGR), and 373–376 (TKLD) each bind GTP.

The protein belongs to the GTP-binding SRP family. FtsY subfamily. In terms of assembly, part of the signal recognition particle protein translocation system, which is composed of SRP and FtsY. SRP is a ribonucleoprotein composed of Ffh and a 4.5S RNA molecule.

It localises to the cell inner membrane. The protein resides in the cytoplasm. It carries out the reaction GTP + H2O = GDP + phosphate + H(+). In terms of biological role, involved in targeting and insertion of nascent membrane proteins into the cytoplasmic membrane. Acts as a receptor for the complex formed by the signal recognition particle (SRP) and the ribosome-nascent chain (RNC). Interaction with SRP-RNC leads to the transfer of the RNC complex to the Sec translocase for insertion into the membrane, the hydrolysis of GTP by both Ffh and FtsY, and the dissociation of the SRP-FtsY complex into the individual components. The sequence is that of Signal recognition particle receptor FtsY from Neisseria meningitidis serogroup B (strain ATCC BAA-335 / MC58).